The following is a 124-amino-acid chain: Small ribosomal subunit protein uS13 (124 aa).

The interval 98–124 (VRGQRTKTNARTRKGPKRTIAGKKKAR) is disordered.

This sequence belongs to the universal ribosomal protein uS13 family. As to quaternary structure, part of the 30S ribosomal subunit. Forms a loose heterodimer with protein S19. Forms two bridges to the 50S subunit in the 70S ribosome.

Located at the top of the head of the 30S subunit, it contacts several helices of the 16S rRNA. In the 70S ribosome it contacts the 23S rRNA (bridge B1a) and protein L5 of the 50S subunit (bridge B1b), connecting the 2 subunits; these bridges are implicated in subunit movement. Contacts the tRNAs in the A and P-sites. This is Small ribosomal subunit protein uS13 from Mycobacterium leprae (strain Br4923).